A 131-amino-acid chain; its full sequence is MIYGIGTDICDVRRIRASLERHGDRFAEKVLAEGELATWRARRARWPERGIRFVATRFSAKEAFSKAIGMGMVMPMTWRSCEVIKLPSGQPAIVLHGALKEWFEARNLQVHLSVTDESDYAASFCVVERRA.

Mg(2+) contacts are provided by aspartate 8 and glutamate 62.

The protein belongs to the P-Pant transferase superfamily. AcpS family. Requires Mg(2+) as cofactor.

The protein localises to the cytoplasm. The enzyme catalyses apo-[ACP] + CoA = holo-[ACP] + adenosine 3',5'-bisphosphate + H(+). Its function is as follows. Transfers the 4'-phosphopantetheine moiety from coenzyme A to a Ser of acyl-carrier-protein. The polypeptide is Holo-[acyl-carrier-protein] synthase (Delftia acidovorans (strain DSM 14801 / SPH-1)).